Reading from the N-terminus, the 194-residue chain is Peptidyl-tRNA hydrolase (194 aa).

TRNA is bound at residue Y16. The Proton acceptor role is filled by H21. The tRNA site is built by F67, N69, and N115.

The protein belongs to the PTH family. As to quaternary structure, monomer.

The protein localises to the cytoplasm. The enzyme catalyses an N-acyl-L-alpha-aminoacyl-tRNA + H2O = an N-acyl-L-amino acid + a tRNA + H(+). Hydrolyzes ribosome-free peptidyl-tRNAs (with 1 or more amino acids incorporated), which drop off the ribosome during protein synthesis, or as a result of ribosome stalling. In terms of biological role, catalyzes the release of premature peptidyl moieties from peptidyl-tRNA molecules trapped in stalled 50S ribosomal subunits, and thus maintains levels of free tRNAs and 50S ribosomes. The polypeptide is Peptidyl-tRNA hydrolase (Escherichia fergusonii (strain ATCC 35469 / DSM 13698 / CCUG 18766 / IAM 14443 / JCM 21226 / LMG 7866 / NBRC 102419 / NCTC 12128 / CDC 0568-73)).